We begin with the raw amino-acid sequence, 138 residues long: MAARRLFGATGSWARWRAWELPDPAGSVRLHVRDYAKRPVFKGGKGAKGAAVGETLKDPEVCTDPVQLTTHPMGVNIYKEGQDVVLKPDSEYPEWLFQMNVGPPKKLEELDPETREYWRLLRKHNIWRHNRLSKNQKF.

The transit peptide at 1–16 directs the protein to the mitochondrion; the sequence is MAARRLFGATGSWARW.

Belongs to the mitochondrion-specific ribosomal protein mL54 family. As to quaternary structure, component of the mitochondrial ribosome large subunit (39S) which comprises a 16S rRNA and about 50 distinct proteins.

It is found in the mitochondrion. The sequence is that of Large ribosomal subunit protein mL54 (MRPL54) from Bos taurus (Bovine).